A 378-amino-acid polypeptide reads, in one-letter code: 4-hydroxy-3-methylbut-2-en-1-yl diphosphate synthase (flavodoxin) (378 aa).

[4Fe-4S] cluster-binding residues include cysteine 268, cysteine 271, cysteine 303, and glutamate 310. Positions 359-378 are disordered; sequence AEREKEKEKEKEKEKETQEQ.

This sequence belongs to the IspG family. The cofactor is [4Fe-4S] cluster.

It catalyses the reaction (2E)-4-hydroxy-3-methylbut-2-enyl diphosphate + oxidized [flavodoxin] + H2O + 2 H(+) = 2-C-methyl-D-erythritol 2,4-cyclic diphosphate + reduced [flavodoxin]. Its pathway is isoprenoid biosynthesis; isopentenyl diphosphate biosynthesis via DXP pathway; isopentenyl diphosphate from 1-deoxy-D-xylulose 5-phosphate: step 5/6. Functionally, converts 2C-methyl-D-erythritol 2,4-cyclodiphosphate (ME-2,4cPP) into 1-hydroxy-2-methyl-2-(E)-butenyl 4-diphosphate. The chain is 4-hydroxy-3-methylbut-2-en-1-yl diphosphate synthase (flavodoxin) from Bacillus cereus (strain ZK / E33L).